Consider the following 1505-residue polypeptide: Probable serine/threonine-protein kinase irlD (1505 aa).

Over residues 1 to 18 (MGPKKGKRSHSKNHHHHN) the composition is skewed to basic residues. 4 disordered regions span residues 1–30 (MGPK…NSGG), 121–211 (IPQP…NNIL), 548–571 (TTTT…DKEN), and 862–1013 (EENE…TIAT). A compositionally biased stretch (low complexity) spans 139–158 (SISTTTTTTTATAIEIESSS). Residues 159–172 (GLTSNITDSTEIQL) are compositionally biased toward polar residues. Low complexity-rich tracts occupy residues 173 to 209 (DSTT…NSNN) and 548 to 561 (TTTT…TTTT). 2 stretches are compositionally biased toward basic and acidic residues: residues 562–571 (IDKDEKDKEN) and 862–882 (EENE…EKKK). Residues 846 to 892 (IRTEESLKAEKDLLEQEENEKKRLKEKRKKEEKEKKKQQNLKQKSLI) are a coiled coil. Residues 896-924 (TTTTTTTTPIPITVPIPTQTQTPTQTPTQ) show a composition bias toward low complexity. A compositionally biased stretch (pro residues) spans 925-943 (TPIPTPIPTTPIPTTPIPI). Low complexity-rich tracts occupy residues 944-954 (PIQLTPTTPKT) and 960-977 (TPKT…KTPK). Over residues 978–989 (NSTLDKQTISTP) the composition is skewed to polar residues. The 271-residue stretch at 1054-1324 (RKDEFIIGRG…TENILLHPFF (271 aa)) folds into the Protein kinase domain. ATP contacts are provided by residues 1060 to 1068 (IGRGSNGTL) and K1083. D1194 serves as the catalytic Proton acceptor. The KEN domain occupies 1327-1505 (HEKKVKFIDA…LIYFNDLIIK (179 aa)).

Belongs to the protein kinase superfamily. Ser/Thr protein kinase family.

It carries out the reaction L-seryl-[protein] + ATP = O-phospho-L-seryl-[protein] + ADP + H(+). It catalyses the reaction L-threonyl-[protein] + ATP = O-phospho-L-threonyl-[protein] + ADP + H(+). This chain is Probable serine/threonine-protein kinase irlD (irlD), found in Dictyostelium discoideum (Social amoeba).